Here is a 409-residue protein sequence, read N- to C-terminus: Arginine deiminase (409 aa).

Cys399 (amidino-cysteine intermediate) is an active-site residue.

It belongs to the arginine deiminase family.

Its subcellular location is the cytoplasm. It carries out the reaction L-arginine + H2O = L-citrulline + NH4(+). The protein operates within amino-acid degradation; L-arginine degradation via ADI pathway; carbamoyl phosphate from L-arginine: step 1/2. The chain is Arginine deiminase from Streptococcus pneumoniae (strain 70585).